We begin with the raw amino-acid sequence, 485 residues long: NADH-quinone oxidoreductase subunit N (485 aa).

14 helical membrane-spanning segments follow: residues 8 to 28, 35 to 55, 71 to 91, 105 to 125, 127 to 147, 159 to 179, 203 to 223, 235 to 255, 271 to 291, 297 to 317, 326 to 346, 373 to 393, 408 to 430, and 450 to 470; these read LIAL…MLSI, FLNA…LWFV, GFAM…CTFA, FYLL…ANHL, SLFL…GYAF, YTIL…LVYA, LLAG…LVPF, PAPV…GVVM, VVLA…ALSQ, LLGY…IALQ, VGVY…VVSL, AAVM…LGFI, WWLV…RVAV, and YSAG…LGVW.

Belongs to the complex I subunit 2 family. In terms of assembly, NDH-1 is composed of 13 different subunits. Subunits NuoA, H, J, K, L, M, N constitute the membrane sector of the complex.

The protein resides in the cell inner membrane. The catalysed reaction is a quinone + NADH + 5 H(+)(in) = a quinol + NAD(+) + 4 H(+)(out). In terms of biological role, NDH-1 shuttles electrons from NADH, via FMN and iron-sulfur (Fe-S) centers, to quinones in the respiratory chain. The immediate electron acceptor for the enzyme in this species is believed to be ubiquinone. Couples the redox reaction to proton translocation (for every two electrons transferred, four hydrogen ions are translocated across the cytoplasmic membrane), and thus conserves the redox energy in a proton gradient. This is NADH-quinone oxidoreductase subunit N from Shigella boydii serotype 4 (strain Sb227).